Reading from the N-terminus, the 644-residue chain is 1-deoxy-D-xylulose-5-phosphate synthase (644 aa).

Residues H78 and G120–A122 each bind thiamine diphosphate. Residue D150 coordinates Mg(2+). Thiamine diphosphate is bound by residues A151–A152, N179, and E374. N179 contributes to the Mg(2+) binding site.

This sequence belongs to the transketolase family. DXPS subfamily. Homodimer. Mg(2+) serves as cofactor. Thiamine diphosphate is required as a cofactor.

It carries out the reaction D-glyceraldehyde 3-phosphate + pyruvate + H(+) = 1-deoxy-D-xylulose 5-phosphate + CO2. The protein operates within metabolic intermediate biosynthesis; 1-deoxy-D-xylulose 5-phosphate biosynthesis; 1-deoxy-D-xylulose 5-phosphate from D-glyceraldehyde 3-phosphate and pyruvate: step 1/1. In terms of biological role, catalyzes the acyloin condensation reaction between C atoms 2 and 3 of pyruvate and glyceraldehyde 3-phosphate to yield 1-deoxy-D-xylulose-5-phosphate (DXP). This is 1-deoxy-D-xylulose-5-phosphate synthase from Chlamydia pneumoniae (Chlamydophila pneumoniae).